A 180-amino-acid polypeptide reads, in one-letter code: Large ribosomal subunit protein uL6 (180 aa).

This sequence belongs to the universal ribosomal protein uL6 family. In terms of assembly, part of the 50S ribosomal subunit.

In terms of biological role, this protein binds to the 23S rRNA, and is important in its secondary structure. It is located near the subunit interface in the base of the L7/L12 stalk, and near the tRNA binding site of the peptidyltransferase center. The protein is Large ribosomal subunit protein uL6 of Borrelia recurrentis (strain A1).